We begin with the raw amino-acid sequence, 474 residues long: 2-succinylbenzoate--CoA ligase (474 aa).

Belongs to the ATP-dependent AMP-binding enzyme family. MenE subfamily.

It catalyses the reaction 2-succinylbenzoate + ATP + CoA = 2-succinylbenzoyl-CoA + AMP + diphosphate. It participates in quinol/quinone metabolism; 1,4-dihydroxy-2-naphthoate biosynthesis; 1,4-dihydroxy-2-naphthoate from chorismate: step 5/7. The protein operates within quinol/quinone metabolism; menaquinone biosynthesis. Functionally, converts 2-succinylbenzoate (OSB) to 2-succinylbenzoyl-CoA (OSB-CoA). The sequence is that of 2-succinylbenzoate--CoA ligase from Staphylococcus epidermidis (strain ATCC 35984 / DSM 28319 / BCRC 17069 / CCUG 31568 / BM 3577 / RP62A).